Consider the following 1867-residue polypeptide: TATA-binding protein-associated factor MOT1 (1867 aa).

Ser93 carries the phosphoserine modification. Residues 169 to 228 (KTDDIKQETSMLNASDKANENKSNANKKSARMLAMARRKKKMSAKNTPKHPVDITESSVS) are disordered. Over residues 181–203 (NASDKANENKSNANKKSARMLAM) the composition is skewed to low complexity. Residues 195–211 (KKSARMLAMARRKKKMS) carry the Nuclear localization signal motif. 3 HEAT repeats span residues 289–326 (WQFQGIYELLLDNLMSENWEIRHGAALGLRELVKKHAY), 445–482 (GLLENVVRIVLYGLNQSDDDVQSVAASILTPITSEFVK), and 541–578 (WSFKSLVPKLYPFLRHSISSVRRAVLNLLIAFLSIKDD). Ser677 bears the Phosphoserine mark. 2 HEAT repeats span residues 1108 to 1145 (SEVFTRFPVLLTFLRSNLSVFRYSAARTFADLAKISSV) and 1188 to 1225 (PYVIFLIVPLLGRMSDSNEDVRNLATTTFASIIKLVPL). Positions 1284–1457 (AFLNKYHLHG…WSLFDFLMPG (174 aa)) constitute a Helicase ATP-binding domain. 1297–1304 (DDMGLGKT) contributes to the ATP binding site. Positions 1408-1411 (DEGH) match the DEGH box motif. The HEAT 6 repeat unit spans residues 1495-1537 (ALHKQVLPFMLRRLKEDVLSDLPPKIIQDYYCELGDLQKQLYM). A Helicase C-terminal domain is found at 1639 to 1787 (PIQNVISQHR…STVVNQQNSG (149 aa)). Residues 1802-1822 (PDNVTSQDNEEKNNGDSQAAK) are disordered.

Belongs to the SNF2/RAD54 helicase family. In terms of assembly, forms a complex with TBP which binds TATA DNA with high affinity but with altered specificity.

Its subcellular location is the mitochondrion. The protein localises to the nucleus. In terms of biological role, regulates transcription in association with TATA binding protein (TBP). Removes TBP from the TATA box via its C-terminal ATPase activity. Both transcription activation and repression require its ATPase activity. This is TATA-binding protein-associated factor MOT1 (MOT1) from Saccharomyces cerevisiae (strain ATCC 204508 / S288c) (Baker's yeast).